A 505-amino-acid chain; its full sequence is Maturase K (505 aa).

The protein belongs to the intron maturase 2 family. MatK subfamily.

The protein localises to the plastid. It is found in the chloroplast. Its function is as follows. Usually encoded in the trnK tRNA gene intron. Probably assists in splicing its own and other chloroplast group II introns. In Elaeagnus umbellata (Autumn olive), this protein is Maturase K.